The sequence spans 152 residues: Ribonuclease H (152 aa).

The RNase H type-1 domain maps to 1-142 (MDSKVVIYTD…ADKLAVQGRE (142 aa)). 4 residues coordinate Mg(2+): aspartate 10, glutamate 48, aspartate 70, and aspartate 134.

It belongs to the RNase H family. As to quaternary structure, monomer. Mg(2+) is required as a cofactor.

The protein localises to the cytoplasm. The enzyme catalyses Endonucleolytic cleavage to 5'-phosphomonoester.. In terms of biological role, endonuclease that specifically degrades the RNA of RNA-DNA hybrids. The polypeptide is Ribonuclease H (Rickettsia felis (strain ATCC VR-1525 / URRWXCal2) (Rickettsia azadi)).